The chain runs to 529 residues: UDP-glucuronosyltransferase 2B33 (529 aa).

The signal sequence occupies residues Met-1–Gly-24. N-linked (GlcNAc...) asparagine glycosylation is found at Asn-67 and Asn-68. Residues Ile-494–Phe-514 form a helical membrane-spanning segment.

It belongs to the UDP-glycosyltransferase family.

It localises to the microsome membrane. The protein resides in the endoplasmic reticulum membrane. It carries out the reaction glucuronate acceptor + UDP-alpha-D-glucuronate = acceptor beta-D-glucuronoside + UDP + H(+). UDPGTs are of major importance in the conjugation and subsequent elimination of potentially toxic xenobiotics and endogenous compounds. This isozyme has glucuronidating capacity on estriol and does not catalyze the glucuronidation of beta-estradiol. Capable of conjugating 4-hydroxyestrone, androsterone, diclofenac, and hyodeoxycholic acid. The protein is UDP-glucuronosyltransferase 2B33 (UGT2B33) of Macaca mulatta (Rhesus macaque).